The sequence spans 394 residues: Argininosuccinate synthase (394 aa).

8–16 (AYSGGLDTS) provides a ligand contact to ATP. Positions 86 and 91 each coordinate L-citrulline. G116 serves as a coordination point for ATP. 3 residues coordinate L-aspartate: T118, N122, and D123. N122 is an L-citrulline binding site. Residues R126, S172, S181, E257, and Y269 each contribute to the L-citrulline site.

This sequence belongs to the argininosuccinate synthase family. Type 1 subfamily. In terms of assembly, homotetramer.

It localises to the cytoplasm. It carries out the reaction L-citrulline + L-aspartate + ATP = 2-(N(omega)-L-arginino)succinate + AMP + diphosphate + H(+). The protein operates within amino-acid biosynthesis; L-arginine biosynthesis; L-arginine from L-ornithine and carbamoyl phosphate: step 2/3. This Methanosarcina acetivorans (strain ATCC 35395 / DSM 2834 / JCM 12185 / C2A) protein is Argininosuccinate synthase.